Consider the following 44-residue polypeptide: Defensin-like peptide (44 aa).

Cystine bridges form between C7–C32, C18–C40, and C22–C42.

As to expression, hemolymph.

It is found in the secreted. Functionally, has antibacterial activity against the Gram-positive bacterium S.lutea (MIC=1.9 uM). Lacks antibacterial activity against the Gram-positive bacteria L.monocytogenes and M.luteus, and the Gram-negative bacteria E.coli D31, E.coli ATCC 25922, and S.typhimurium. Has antifungal activity against A.niger (MIC=2.9 uM), C.albicans (MIC=2.9 uM), C.fructus (MIC=2.9 uM), C.wickerhamii (MIC=2.9 uM), P.pastoris (MIC=2.9 uM), P.stiptis (MIC=2.9 uM), P.tannophilus (MIC=2.9 uM), T.harzianum (MIC=2.9 uM), and Z.marxianus (MIC=2.9 uM), but lacks antifungal activity against C.albidus, F.oxysporum, and S.cerevisiae. This Galleria mellonella (Greater wax moth) protein is Defensin-like peptide.